A 90-amino-acid polypeptide reads, in one-letter code: UPF0367 protein P9301_01411 (90 aa).

The protein belongs to the UPF0367 family.

This is UPF0367 protein P9301_01411 from Prochlorococcus marinus (strain MIT 9301).